Here is a 659-residue protein sequence, read N- to C-terminus: 1,4-alpha-glucan branching enzyme GlgB (659 aa).

Over residues 1 to 12 (MRNCKELKHEKN) the composition is skewed to basic and acidic residues. Positions 1–25 (MRNCKELKHEKNGNVTEKIGKNKGK) are disordered. Residue aspartate 337 is the Nucleophile of the active site. Residue glutamate 390 is the Proton donor of the active site.

The protein belongs to the glycosyl hydrolase 13 family. GlgB subfamily. In terms of assembly, monomer.

It carries out the reaction Transfers a segment of a (1-&gt;4)-alpha-D-glucan chain to a primary hydroxy group in a similar glucan chain.. The protein operates within glycan biosynthesis; glycogen biosynthesis. Catalyzes the formation of the alpha-1,6-glucosidic linkages in glycogen by scission of a 1,4-alpha-linked oligosaccharide from growing alpha-1,4-glucan chains and the subsequent attachment of the oligosaccharide to the alpha-1,6 position. The polypeptide is 1,4-alpha-glucan branching enzyme GlgB (Clostridium perfringens (strain ATCC 13124 / DSM 756 / JCM 1290 / NCIMB 6125 / NCTC 8237 / Type A)).